Consider the following 522-residue polypeptide: Cytochrome P450 monooxygenase FGSG_08207 (522 aa).

A helical transmembrane segment spans residues 10–30 (LLLSKPVVLGLAACALLFLIG). N-linked (GlcNAc...) asparagine glycosylation is found at N104 and N155. C441 is a heme binding site.

It belongs to the cytochrome P450 family. Heme serves as cofactor.

The protein resides in the membrane. It participates in secondary metabolite biosynthesis. Functionally, cytochrome P450 monooxygenase; part of the gene cluster that mediates the biosynthesis of the lipopeptide fusaristatin A. Fusaristatin A consists of a polyketide chain linked to three amino acid residues glutamine (Gln), dehydroalanine (dehydro-Ala), and beta-aminoisobutyric acid. The biosynthesis starts with formation of a linear polyketide chain by the highly reducing polyketide synthase PKS6. The gene cluster does not contain an acyl-CoA ligase or an acyl-transferase, and it is therefore predicted that the polyketide is transferred directly to the nonribosomal peptide synthetase NRPS7. Modules 1-3 from NRPS7 incorporate dehydro-Ala, Gln, and beta-aminoisobutyric acid in the compound, which is released by cyclization. The beta-aminoisobutyric acid units are most likely not freely available to the NRPS, but can be synthesized from thymine, which requires a dehydrogenase, a monooxygenase, and an aminotransferase. The fusaristatin A cluster contains a cytochrome P450 monooxygenase (FGSG_08207) and an aminotransferase (FGSG_17085), which theoretically can perform two of the enzymatic steps. The enzymes may however also be involved in biosynthesis of dehydroalanine or modification of the polyketide. The dehydro-Ala residue can be a result of cyclization, where serine is dehydrated. The last gene of the cluster encodes a protein with an A/B barrel domain found in variable enzymes, which hampers functional prediction. The polypeptide is Cytochrome P450 monooxygenase FGSG_08207 (Gibberella zeae (strain ATCC MYA-4620 / CBS 123657 / FGSC 9075 / NRRL 31084 / PH-1) (Wheat head blight fungus)).